Reading from the N-terminus, the 143-residue chain is Transcriptional regulator MraZ (143 aa).

SpoVT-AbrB domains are found at residues 5–47 (EYSH…PMAV) and 76–119 (ALEA…SAEN).

The protein belongs to the MraZ family. Forms oligomers.

The protein resides in the cytoplasm. Its subcellular location is the nucleoid. The sequence is that of Transcriptional regulator MraZ from Leuconostoc mesenteroides subsp. mesenteroides (strain ATCC 8293 / DSM 20343 / BCRC 11652 / CCM 1803 / JCM 6124 / NCDO 523 / NBRC 100496 / NCIMB 8023 / NCTC 12954 / NRRL B-1118 / 37Y).